Consider the following 281-residue polypeptide: Ribosomal protein L11 methyltransferase (281 aa).

Residues T133, G154, D175, and N216 each coordinate S-adenosyl-L-methionine.

Belongs to the methyltransferase superfamily. PrmA family.

It localises to the cytoplasm. It carries out the reaction L-lysyl-[protein] + 3 S-adenosyl-L-methionine = N(6),N(6),N(6)-trimethyl-L-lysyl-[protein] + 3 S-adenosyl-L-homocysteine + 3 H(+). Methylates ribosomal protein L11. The sequence is that of Ribosomal protein L11 methyltransferase from Campylobacter jejuni (strain RM1221).